We begin with the raw amino-acid sequence, 341 residues long: L-threonine 3-dehydrogenase (341 aa).

Cysteine 38 lines the Zn(2+) pocket. Catalysis depends on charge relay system residues threonine 40 and histidine 43. Positions 63, 64, 93, 96, 99, and 107 each coordinate Zn(2+). Residues isoleucine 175, aspartate 195, arginine 200, 262 to 264 (LGI), and 286 to 287 (IY) contribute to the NAD(+) site.

Belongs to the zinc-containing alcohol dehydrogenase family. In terms of assembly, homotetramer. The cofactor is Zn(2+).

Its subcellular location is the cytoplasm. It catalyses the reaction L-threonine + NAD(+) = (2S)-2-amino-3-oxobutanoate + NADH + H(+). The protein operates within amino-acid degradation; L-threonine degradation via oxydo-reductase pathway; glycine from L-threonine: step 1/2. Functionally, catalyzes the NAD(+)-dependent oxidation of L-threonine to 2-amino-3-ketobutyrate. The polypeptide is L-threonine 3-dehydrogenase (Solibacter usitatus (strain Ellin6076)).